A 601-amino-acid chain; its full sequence is Phosphomethylpyrimidine synthase (601 aa).

Disordered stretches follow at residues 1 to 31 (MTNK…GKSI) and 100 to 141 (AGRP…RDGQ). Residues 100-112 (AGRPVRPEDDGIK) are compositionally biased toward basic and acidic residues. Residues asparagine 208, methionine 237, tyrosine 266, histidine 302, 322 to 324 (SRG), 363 to 366 (DGLR), and glutamate 402 contribute to the substrate site. Zn(2+) is bound at residue histidine 406. Tyrosine 429 contacts substrate. A Zn(2+)-binding site is contributed by histidine 470. Residues cysteine 550, cysteine 553, and cysteine 558 each coordinate [4Fe-4S] cluster.

The protein belongs to the ThiC family. [4Fe-4S] cluster is required as a cofactor.

It catalyses the reaction 5-amino-1-(5-phospho-beta-D-ribosyl)imidazole + S-adenosyl-L-methionine = 4-amino-2-methyl-5-(phosphooxymethyl)pyrimidine + CO + 5'-deoxyadenosine + formate + L-methionine + 3 H(+). Its pathway is cofactor biosynthesis; thiamine diphosphate biosynthesis. Functionally, catalyzes the synthesis of the hydroxymethylpyrimidine phosphate (HMP-P) moiety of thiamine from aminoimidazole ribotide (AIR) in a radical S-adenosyl-L-methionine (SAM)-dependent reaction. This chain is Phosphomethylpyrimidine synthase, found in Streptomyces avermitilis (strain ATCC 31267 / DSM 46492 / JCM 5070 / NBRC 14893 / NCIMB 12804 / NRRL 8165 / MA-4680).